The primary structure comprises 109 residues: Large ribosomal subunit protein uL22 (109 aa).

It belongs to the universal ribosomal protein uL22 family. Part of the 50S ribosomal subunit.

In terms of biological role, this protein binds specifically to 23S rRNA; its binding is stimulated by other ribosomal proteins, e.g. L4, L17, and L20. It is important during the early stages of 50S assembly. It makes multiple contacts with different domains of the 23S rRNA in the assembled 50S subunit and ribosome. Its function is as follows. The globular domain of the protein is located near the polypeptide exit tunnel on the outside of the subunit, while an extended beta-hairpin is found that lines the wall of the exit tunnel in the center of the 70S ribosome. This is Large ribosomal subunit protein uL22 from Dehalococcoides mccartyi (strain ATCC BAA-2100 / JCM 16839 / KCTC 5957 / BAV1).